The chain runs to 382 residues: Processive diacylglycerol beta-glucosyltransferase (382 aa).

Belongs to the glycosyltransferase 28 family. UgtP subfamily.

It is found in the cell membrane. It carries out the reaction a 1,2-diacyl-3-O-(beta-D-glucopyranosyl)-sn-glycerol + UDP-alpha-D-glucose = a 1,2-diacyl-3-O-(beta-D-Glc-(1-&gt;6)-beta-D-Glc)-sn-glycerol + UDP + H(+). The enzyme catalyses a 1,2-diacyl-3-O-(beta-D-Glc-(1-&gt;6)-beta-D-Glc)-sn-glycerol + UDP-alpha-D-glucose = a 1,2-diacyl-3-O-(beta-D-Glc-(1-&gt;6)-beta-D-Glc-(1-&gt;6)-beta-D-Glc)-sn-glycerol + UDP + H(+). The catalysed reaction is a 1,2-diacyl-sn-glycerol + UDP-alpha-D-glucose = a 1,2-diacyl-3-O-(beta-D-glucopyranosyl)-sn-glycerol + UDP + H(+). It functions in the pathway glycolipid metabolism; diglucosyl-diacylglycerol biosynthesis. In terms of biological role, processive glucosyltransferase involved in the biosynthesis of both the bilayer- and non-bilayer-forming membrane glucolipids. Is able to successively transfer up to three glucosyl residues to diacylglycerol (DAG), thereby catalyzing the formation of beta-monoglucosyl-DAG (3-O-(beta-D-glucopyranosyl)-1,2-diacyl-sn-glycerol), beta-diglucosyl-DAG (3-O-(beta-D-glucopyranosyl-beta-(1-&gt;6)-D-glucopyranosyl)-1,2-diacyl-sn-glycerol) and beta-triglucosyl-DAG (3-O-(beta-D-glucopyranosyl-beta-(1-&gt;6)-D-glucopyranosyl-beta-(1-&gt;6)-D-glucopyranosyl)-1,2-diacyl-sn-glycerol). Beta-diglucosyl-DAG is the predominant glycolipid found in Bacillales and is also used as a membrane anchor for lipoteichoic acid (LTA). Also seems to be able to form beta-tetraglucosyl-DAG, although this glycolipid has not been found in B.subtilis membrane. UgtP can only use UDP-glucose as sugar donor. This chain is Processive diacylglycerol beta-glucosyltransferase, found in Bacillus subtilis (strain 168).